We begin with the raw amino-acid sequence, 78 residues long: uncharacterized protein (78 aa).

Residues 51 to 78 are disordered; it reads GGKWDGGGSGGKWNGGGGSGGGSWKKWN.

This is an uncharacterized protein from Dictyostelium discoideum (Social amoeba).